Reading from the N-terminus, the 258-residue chain is Isoprenyl transferase 1 (258 aa).

Asp39 is an active-site residue. Mg(2+) is bound at residue Asp39. Residues 40 to 43, Trp44, Arg52, His57, and 85 to 87 contribute to the substrate site; these read GNRR and SND. Residue Asn88 is the Proton acceptor of the active site. Residues Arg92, Arg207, and 213–215 each bind substrate; that span reads RLS. Residue Glu226 coordinates Mg(2+).

This sequence belongs to the UPP synthase family. As to quaternary structure, homodimer. Mg(2+) serves as cofactor.

Catalyzes the condensation of isopentenyl diphosphate (IPP) with allylic pyrophosphates generating different type of terpenoids. This Tropheryma whipplei (strain TW08/27) (Whipple's bacillus) protein is Isoprenyl transferase 1.